A 48-amino-acid polypeptide reads, in one-letter code: U1-theraphotoxin-Agm1a (48 aa).

3 disulfides stabilise this stretch: Cys-4-Cys-34, Cys-8-Cys-40, and Cys-22-Cys-45. A Methionine sulfoxide; partial modification is found at Met-44.

Belongs to the neurotoxin 12 (Hwtx-2) family. 01 (Ap1a) subfamily. As to expression, expressed by the venom gland.

The protein localises to the secreted. Is toxic to both insects and mammals. Induces reversible paralysis when injected into S.frugiperda larvae. Reduces both the amplitude and frequency of responses from muscle (GF-TTM and GF-DLM) pathways in the D.melanogaster giant fiber circuit, suggesting an action at the neuromuscular junction, which is mediated by glutamatergic receptors. In mice, intracranial injection of 30 ug causes increased urination, myoclonus, hypermotility with circular movements followed by respiratory and generalized seizures resulting in death within 25-35 minutes of injection. The protein is U1-theraphotoxin-Agm1a of Acanthoscurria gomesiana (Tarantula spider).